Here is a 525-residue protein sequence, read N- to C-terminus: Cytochrome P450 monooxygenase tpcC (525 aa).

A helical membrane pass occupies residues 13 to 33; that stretch reads LPVTLVSLLVGSIFYFCYLTV. A heme-binding site is contributed by Cys457.

It belongs to the cytochrome P450 family. Heme serves as cofactor.

It is found in the membrane. The protein operates within secondary metabolite biosynthesis; terpenoid biosynthesis. Cytochrome P450 monooxygenase; part of the gene cluster that mediates the biosynthesis of terpestacin. The bifunctional terpene synthase tpcA converts isopentenyl diphosphate (IPP) and dimethylallyl diphosphate (DMAPP) into the sesterterpene preterpestacin I. The C-terminal prenyltransferase (PT) domain of tpcA catalyzes formation of GFPP, whereas the N-terminal terpene cyclase (TC) domain catalyzes the cyclization of GFPP into preterpestacin I. The cytochrome P450 monooxygenase tpcB then hydroxylates preterpestacin I to yield 24-hydroxypreterpstacin I (renamed as preterpestacin II) whereas the cytochrome P450 monooxygenase tpcC further hydroxylates preterpestacin II to yield 16,17-dihydroxypreterpestacin II (renamed as preterpestacin III). Finally, the FAD-dependent monooxygenase tpcD converts preterpestacin III into terpestacin. The sequence is that of Cytochrome P450 monooxygenase tpcC from Cochliobolus heterostrophus (strain C5 / ATCC 48332 / race O) (Southern corn leaf blight fungus).